A 366-amino-acid polypeptide reads, in one-letter code: Carbamoyl phosphate synthase small chain (366 aa).

The tract at residues 1–168 is CPSase; the sequence is MYGILVLEDG…KETVIYNAED (168 aa). L-glutamine is bound by residues Ser-45, Gly-220, and Gly-222. One can recognise a Glutamine amidotransferase type-1 domain in the interval 172–363; it reads RCVLIDCGVK…VELGIKFKAE (192 aa). Residue Cys-247 is the Nucleophile of the active site. L-glutamine is bound by residues Leu-248, Gln-251, Asn-289, Gly-291, and Phe-292. Residues His-336 and Glu-338 contribute to the active site.

The protein belongs to the CarA family. As to quaternary structure, composed of two chains; the small (or glutamine) chain promotes the hydrolysis of glutamine to ammonia, which is used by the large (or ammonia) chain to synthesize carbamoyl phosphate. Tetramer of heterodimers (alpha,beta)4.

It catalyses the reaction hydrogencarbonate + L-glutamine + 2 ATP + H2O = carbamoyl phosphate + L-glutamate + 2 ADP + phosphate + 2 H(+). The enzyme catalyses L-glutamine + H2O = L-glutamate + NH4(+). It participates in amino-acid biosynthesis; L-arginine biosynthesis; carbamoyl phosphate from bicarbonate: step 1/1. It functions in the pathway pyrimidine metabolism; UMP biosynthesis via de novo pathway; (S)-dihydroorotate from bicarbonate: step 1/3. Small subunit of the glutamine-dependent carbamoyl phosphate synthetase (CPSase). CPSase catalyzes the formation of carbamoyl phosphate from the ammonia moiety of glutamine, carbonate, and phosphate donated by ATP, constituting the first step of 2 biosynthetic pathways, one leading to arginine and/or urea and the other to pyrimidine nucleotides. The small subunit (glutamine amidotransferase) binds and cleaves glutamine to supply the large subunit with the substrate ammonia. The polypeptide is Carbamoyl phosphate synthase small chain (Methanococcus maripaludis (strain C5 / ATCC BAA-1333)).